A 431-amino-acid polypeptide reads, in one-letter code: UDP-N-acetylmuramoylalanine--D-glutamate ligase (431 aa).

111-117 provides a ligand contact to ATP; that stretch reads GTDGKST.

Belongs to the MurCDEF family.

It is found in the cytoplasm. It carries out the reaction UDP-N-acetyl-alpha-D-muramoyl-L-alanine + D-glutamate + ATP = UDP-N-acetyl-alpha-D-muramoyl-L-alanyl-D-glutamate + ADP + phosphate + H(+). It participates in cell wall biogenesis; peptidoglycan biosynthesis. Cell wall formation. Catalyzes the addition of glutamate to the nucleotide precursor UDP-N-acetylmuramoyl-L-alanine (UMA). The chain is UDP-N-acetylmuramoylalanine--D-glutamate ligase from Petrotoga mobilis (strain DSM 10674 / SJ95).